Consider the following 552-residue polypeptide: Arginine--tRNA ligase (552 aa).

A 'HIGH' region motif is present at residues 130–140 (ANPTGPLSIGH).

Belongs to the class-I aminoacyl-tRNA synthetase family. As to quaternary structure, monomer.

It is found in the cytoplasm. It catalyses the reaction tRNA(Arg) + L-arginine + ATP = L-arginyl-tRNA(Arg) + AMP + diphosphate. This is Arginine--tRNA ligase from Desulfotalea psychrophila (strain LSv54 / DSM 12343).